We begin with the raw amino-acid sequence, 143 residues long: Large ribosomal subunit protein uL16 (143 aa).

Over residues 1–14 (MLTPKRVKWRRQHR) the composition is skewed to basic residues. The disordered stretch occupies residues 1 to 23 (MLTPKRVKWRRQHRPDRAGKAKG).

It belongs to the universal ribosomal protein uL16 family. In terms of assembly, part of the 50S ribosomal subunit.

In terms of biological role, binds 23S rRNA and is also seen to make contacts with the A and possibly P site tRNAs. The sequence is that of Large ribosomal subunit protein uL16 from Desulforudis audaxviator (strain MP104C).